Consider the following 413-residue polypeptide: DnaJ protein homolog (413 aa).

In terms of domain architecture, J spans 10-75 (NTKYYEILGV…REIYDQYGED (66 aa)). A CR-type zinc finger spans residues 133-217 (GTSKKLSLSR…CKGEKVVQEK (85 aa)). 4 CXXCXGXG motif repeats span residues 146-153 (CSKCKGKG), 162-169 (CPGCQGSG), 189-196 (CNECKGTG), and 205-212 (CSQCKGEK). The segment at 387-413 (RRKQAQEAYDEDEDMHGGAQRVQCAQQ) is disordered. Cys410 is modified (cysteine methyl ester). A lipid anchor (S-farnesyl cysteine) is attached at Cys410. Positions 411–413 (AQQ) are cleaved as a propeptide — removed in mature form.

As to expression, expressed in seedlings in all tissues, but exceedingly high levels in hypocotyledons and roots.

It localises to the cell membrane. In terms of biological role, plays a continuous role in plant development probably in the structural organization of compartments. The chain is DnaJ protein homolog (DNAJ1) from Cucumis sativus (Cucumber).